Consider the following 151-residue polypeptide: Prefoldin subunit alpha (151 aa).

Belongs to the prefoldin subunit alpha family. Heterohexamer of two alpha and four beta subunits.

It localises to the cytoplasm. Functionally, molecular chaperone capable of stabilizing a range of proteins. Seems to fulfill an ATP-independent, HSP70-like function in archaeal de novo protein folding. This is Prefoldin subunit alpha (pfdA) from Aeropyrum pernix (strain ATCC 700893 / DSM 11879 / JCM 9820 / NBRC 100138 / K1).